We begin with the raw amino-acid sequence, 602 residues long: Elongation factor 4 (602 aa).

The 182-residue stretch at 8–189 (KNIRNFSIIA…KIITTIPAPS (182 aa)) folds into the tr-type G domain. Residues 20-25 (DHGKST) and 136-139 (NKID) contribute to the GTP site.

This sequence belongs to the TRAFAC class translation factor GTPase superfamily. Classic translation factor GTPase family. LepA subfamily.

Its subcellular location is the cell inner membrane. The enzyme catalyses GTP + H2O = GDP + phosphate + H(+). In terms of biological role, required for accurate and efficient protein synthesis under certain stress conditions. May act as a fidelity factor of the translation reaction, by catalyzing a one-codon backward translocation of tRNAs on improperly translocated ribosomes. Back-translocation proceeds from a post-translocation (POST) complex to a pre-translocation (PRE) complex, thus giving elongation factor G a second chance to translocate the tRNAs correctly. Binds to ribosomes in a GTP-dependent manner. In Helicobacter pylori (strain ATCC 700392 / 26695) (Campylobacter pylori), this protein is Elongation factor 4.